Here is a 383-residue protein sequence, read N- to C-terminus: Na(+)/H(+) antiporter NhaA (383 aa).

Transmembrane regions (helical) follow at residues Leu10–Pro30, Leu56–Ile76, Ile91–Ser111, Gly121–Gly141, Leu150–Phe170, Ser174–Asn194, Val206–Ala226, Pro254–Ser274, Ile289–Phe308, Gly327–Phe347, and Ala355–Leu375.

It belongs to the NhaA Na(+)/H(+) (TC 2.A.33) antiporter family.

The protein localises to the cell inner membrane. It carries out the reaction Na(+)(in) + 2 H(+)(out) = Na(+)(out) + 2 H(+)(in). Na(+)/H(+) antiporter that extrudes sodium in exchange for external protons. The chain is Na(+)/H(+) antiporter NhaA from Francisella tularensis subsp. mediasiatica (strain FSC147).